The following is an 882-amino-acid chain: Protein O-mannosyl-transferase TMTC1 (882 aa).

The Cytoplasmic portion of the chain corresponds to 1-20; the sequence is MVVTTSARGGGGDRTPSRRR. The disordered stretch occupies residues 1–20; the sequence is MVVTTSARGGGGDRTPSRRR. Residues 21-41 form a helical membrane-spanning segment; it reads GCGLAPAGAAALLAGASCLCY. The Extracellular segment spans residues 42–110; it reads GRSLQGEFVH…KLNIFLTGMN (69 aa). Asn-86 carries N-linked (GlcNAc...) asparagine glycosylation. The helical transmembrane segment at 111–131 threads the bilayer; sequence PFYFHAVNIILHCLVTLVLMY. Residues 132-137 are Cytoplasmic-facing; sequence TCDKTV. The chain crosses the membrane as a helical span at residues 138–157; the sequence is FKNRGLAFVTALLFAVHPIH. Over 158–160 the chain is Extracellular; sequence TEA. Residues 161–181 form a helical membrane-spanning segment; it reads VAGIVGRADVLACLLFLLAFL. Residues 182–197 are Cytoplasmic-facing; sequence SYNRSLDQGCVGGSFP. The chain crosses the membrane as a helical span at residues 198 to 218; sequence STVSPFFLLLSLFLGTCAMLV. Over 219–221 the chain is Extracellular; sequence KET. A helical transmembrane segment spans residues 222–238; the sequence is GITVFGVCLVYDLFSLS. Residues 239–313 lie on the Cytoplasmic side of the membrane; that stretch reads NKQDKSSNGA…SPRAVWSMMR (75 aa). The interval 246-277 is disordered; sequence NGALCPRSPQQPGSPQPSSLPGHPHRENGKQQ. Low complexity predominate over residues 251 to 267; that stretch reads PRSPQQPGSPQPSSLPG. A helical membrane pass occupies residues 314 to 334; sequence FLTYSYLLAFNVWLLLAPVTL. Residues 335-354 are Extracellular-facing; that stretch reads CYDWQVGSIPLVETIWDMRN. The chain crosses the membrane as a helical span at residues 355–375; the sequence is LATIFLAVVMALLSLHCLAAF. At 376 to 381 the chain is on the cytoplasmic side; it reads KRLEHK. Residues 382–402 traverse the membrane as a helical segment; the sequence is EVLVGLLFLVFPFIPASNLFF. Position 403 (Arg-403) is a topological domain, extracellular. Residues 404–424 traverse the membrane as a helical segment; that stretch reads VGFVVAERVLYMPSMGYCILF. Over 425–438 the chain is Cytoplasmic; it reads VHGLSKLCTWLNRC. Residues 439–459 traverse the membrane as a helical segment; that stretch reads GATTLIVSTVLLLLLFSWKTV. The Extracellular segment spans residues 460 to 882; that stretch reads KQNEIWLSRE…LQEVREKDQT (423 aa). 10 TPR repeats span residues 483 to 516, 517 to 547, 548 to 581, 582 to 615, 616 to 649, 650 to 682, 683 to 716, 751 to 784, 789 to 822, and 823 to 856; these read AKVH…YPRH, ASAL…HPQH, NRAL…GPEF, ADAY…CPDS, SDLH…SPSH, HVAM…VAHK, AEIL…QPSQ, LECY…KPKD, SELF…NPDQ, and AQAW…VPDS.

The protein belongs to the TMTC family. In terms of assembly, may interact with FAM168B.

It is found in the membrane. The protein localises to the endoplasmic reticulum. The enzyme catalyses a di-trans,poly-cis-dolichyl beta-D-mannosyl phosphate + L-seryl-[protein] = 3-O-(alpha-D-mannosyl)-L-seryl-[protein] + a di-trans,poly-cis-dolichyl phosphate + H(+). It catalyses the reaction a di-trans,poly-cis-dolichyl beta-D-mannosyl phosphate + L-threonyl-[protein] = 3-O-(alpha-D-mannosyl)-L-threonyl-[protein] + a di-trans,poly-cis-dolichyl phosphate + H(+). Its pathway is protein modification; protein glycosylation. Functionally, transfers mannosyl residues to the hydroxyl group of serine or threonine residues. The 4 members of the TMTC family are O-mannosyl-transferases dedicated primarily to the cadherin superfamily, each member seems to have a distinct role in decorating the cadherin domains with O-linked mannose glycans at specific regions. Also acts as O-mannosyl-transferase on other proteins such as PDIA3. In Homo sapiens (Human), this protein is Protein O-mannosyl-transferase TMTC1.